A 249-amino-acid chain; its full sequence is 2,3-bisphosphoglycerate-dependent phosphoglycerate mutase (249 aa).

Residues 9 to 16 (RHGQSQWN), 22 to 23 (TG), R61, 88 to 91 (ERHY), K99, 115 to 116 (RR), and 184 to 185 (GN) each bind substrate. H10 (tele-phosphohistidine intermediate) is an active-site residue. Residue E88 is the Proton donor/acceptor of the active site.

It belongs to the phosphoglycerate mutase family. BPG-dependent PGAM subfamily. In terms of assembly, homodimer.

The catalysed reaction is (2R)-2-phosphoglycerate = (2R)-3-phosphoglycerate. It functions in the pathway carbohydrate degradation; glycolysis; pyruvate from D-glyceraldehyde 3-phosphate: step 3/5. In terms of biological role, catalyzes the interconversion of 2-phosphoglycerate and 3-phosphoglycerate. The polypeptide is 2,3-bisphosphoglycerate-dependent phosphoglycerate mutase (Xanthomonas campestris pv. campestris (strain 8004)).